Reading from the N-terminus, the 394-residue chain is Elongation factor Tu 2 (394 aa).

The tr-type G domain maps to 10–204; sequence KPHVNVGTIG…FLDSYIPEPE (195 aa). A G1 region spans residues 19 to 26; it reads GHVDHGKT. A GTP-binding site is contributed by 19–26; sequence GHVDHGKT. T26 provides a ligand contact to Mg(2+). Residues 60-64 are G2; that stretch reads GITIN. Residues 81–84 are G3; sequence DCPG. Residues 81–85 and 136–139 each bind GTP; these read DCPGH and NKCD. The segment at 136-139 is G4; sequence NKCD. Residues 174–176 are G5; the sequence is SAL.

Belongs to the TRAFAC class translation factor GTPase superfamily. Classic translation factor GTPase family. EF-Tu/EF-1A subfamily. As to quaternary structure, monomer.

The protein localises to the cytoplasm. It carries out the reaction GTP + H2O = GDP + phosphate + H(+). In terms of biological role, GTP hydrolase that promotes the GTP-dependent binding of aminoacyl-tRNA to the A-site of ribosomes during protein biosynthesis. The chain is Elongation factor Tu 2 from Escherichia coli O139:H28 (strain E24377A / ETEC).